We begin with the raw amino-acid sequence, 534 residues long: Bifunctional pantoate ligase/cytidylate kinase (534 aa).

The tract at residues 1-302 (MRLLTTVAAL…LGSTRLIDNT (302 aa)) is pantoate--beta-alanine ligase. Position 48 to 55 (48 to 55 (MGSLHQGH)) interacts with ATP. H55 (proton donor) is an active-site residue. Q79 provides a ligand contact to (R)-pantoate. Residue Q79 coordinates beta-alanine. Residue 172 to 175 (GQKD) participates in ATP binding. Q178 contributes to the (R)-pantoate binding site. ATP-binding positions include V201 and 209–212 (CSSR). Residues 303–534 (ILRDRQPIIA…DYYQQRLSQW (232 aa)) form a cytidylate kinase region.

This sequence in the N-terminal section; belongs to the pantothenate synthetase family. In the C-terminal section; belongs to the cytidylate kinase family. Type 1 subfamily.

Its subcellular location is the cytoplasm. It catalyses the reaction (R)-pantoate + beta-alanine + ATP = (R)-pantothenate + AMP + diphosphate + H(+). It carries out the reaction CMP + ATP = CDP + ADP. The catalysed reaction is dCMP + ATP = dCDP + ADP. The protein operates within cofactor biosynthesis; (R)-pantothenate biosynthesis; (R)-pantothenate from (R)-pantoate and beta-alanine: step 1/1. In terms of biological role, catalyzes the condensation of pantoate with beta-alanine in an ATP-dependent reaction via a pantoyl-adenylate intermediate. Its function is as follows. Catalyzes the transfer of a phosphate group from ATP to either CMP or dCMP to form CDP or dCDP and ADP, respectively. This chain is Bifunctional pantoate ligase/cytidylate kinase, found in Nostoc sp. (strain PCC 7120 / SAG 25.82 / UTEX 2576).